Reading from the N-terminus, the 135-residue chain is Putative pre-16S rRNA nuclease (135 aa).

The protein belongs to the YqgF nuclease family.

It is found in the cytoplasm. Its function is as follows. Could be a nuclease involved in processing of the 5'-end of pre-16S rRNA. In Christiangramia forsetii (strain DSM 17595 / CGMCC 1.15422 / KT0803) (Gramella forsetii), this protein is Putative pre-16S rRNA nuclease.